We begin with the raw amino-acid sequence, 890 residues long: Translation initiation factor IF-2 (890 aa).

The disordered stretch occupies residues 50–304 (LRQGSPEQEE…LQQEFERPTA (255 aa)). 3 stretches are compositionally biased toward basic and acidic residues: residues 112–125 (KRSDIEAEEKRKQE), 136–147 (RALEQEEAKREE), and 217–262 (ALKE…QEAK). Residues 390–559 (GRAPVVTVMG…VLQAELQELK (170 aa)) enclose the tr-type G domain. Residues 399-406 (GHVDHGKT) form a G1 region. Position 399-406 (399-406 (GHVDHGKT)) interacts with GTP. The interval 424-428 (GITQH) is G2. The interval 445-448 (DTPG) is G3. Residues 445-449 (DTPGH) and 499-502 (NKMD) contribute to the GTP site. The G4 stretch occupies residues 499–502 (NKMD). The tract at residues 535 to 537 (SAM) is G5.

It belongs to the TRAFAC class translation factor GTPase superfamily. Classic translation factor GTPase family. IF-2 subfamily.

It is found in the cytoplasm. In terms of biological role, one of the essential components for the initiation of protein synthesis. Protects formylmethionyl-tRNA from spontaneous hydrolysis and promotes its binding to the 30S ribosomal subunits. Also involved in the hydrolysis of GTP during the formation of the 70S ribosomal complex. The protein is Translation initiation factor IF-2 of Halorhodospira halophila (strain DSM 244 / SL1) (Ectothiorhodospira halophila (strain DSM 244 / SL1)).